Here is a 600-residue protein sequence, read N- to C-terminus: Zinc metalloproteinase-disintegrin-like stejnihagin-A (600 aa).

Positions 1 to 20 (MIEVLLVTICLAVFPYQGSS) are cleaved as a signal peptide. Residues 21 to 191 (IILESGNVND…KASQLVVTAE (171 aa)) constitute a propeptide that is removed on maturation. A Pyrrolidone carboxylic acid modification is found at glutamine 192. A Peptidase M12B domain is found at 198 to 389 (RYVKLAIVAD…YNPQCILNAP (192 aa)). Disulfide bonds link cysteine 306–cysteine 384, cysteine 346–cysteine 368, and cysteine 348–cysteine 351. Asparagine 317 is a glycosylation site (N-linked (GlcNAc...) asparagine). Histidine 331 serves as a coordination point for Zn(2+). Residue glutamate 332 is part of the active site. Zn(2+)-binding residues include histidine 335 and histidine 341. N-linked (GlcNAc...) asparagine glycosylation is present at asparagine 367. Residues 397-483 (PPVCGNELLE…DCPTDDFHRN (87 aa)) enclose the Disintegrin domain. Ca(2+)-binding residues include valine 399, asparagine 402, leucine 404, glutamate 406, glutamate 409, and aspartate 412. 14 cysteine pairs are disulfide-bonded: cysteine 400-cysteine 429, cysteine 411-cysteine 424, cysteine 413-cysteine 419, cysteine 423-cysteine 446, cysteine 437-cysteine 443, cysteine 442-cysteine 468, cysteine 455-cysteine 475, cysteine 462-cysteine 494, cysteine 487-cysteine 499, cysteine 506-cysteine 556, cysteine 521-cysteine 565, cysteine 534-cysteine 544, cysteine 551-cysteine 587, and cysteine 581-cysteine 593. The D/ECD-tripeptide motif lies at 461–463 (ECD). Asparagine 568 carries N-linked (GlcNAc...) asparagine glycosylation.

This sequence belongs to the venom metalloproteinase (M12B) family. P-III subfamily. P-IIIa sub-subfamily. Monomer. It depends on Zn(2+) as a cofactor. Expressed by the venom gland.

It is found in the secreted. This metalloproteinase-disintegrin-like impairs hemostasis in the envenomed animal. The chain is Zinc metalloproteinase-disintegrin-like stejnihagin-A from Trimeresurus stejnegeri (Chinese green tree viper).